The primary structure comprises 318 residues: Ribosomal RNA small subunit methyltransferase H (318 aa).

Residues 38–40 (AGH), aspartate 57, leucine 91, aspartate 105, and glutamine 112 contribute to the S-adenosyl-L-methionine site.

It belongs to the methyltransferase superfamily. RsmH family.

The protein resides in the cytoplasm. It carries out the reaction cytidine(1402) in 16S rRNA + S-adenosyl-L-methionine = N(4)-methylcytidine(1402) in 16S rRNA + S-adenosyl-L-homocysteine + H(+). Functionally, specifically methylates the N4 position of cytidine in position 1402 (C1402) of 16S rRNA. The chain is Ribosomal RNA small subunit methyltransferase H from Clavibacter michiganensis subsp. michiganensis (strain NCPPB 382).